The sequence spans 129 residues: Fluoride-specific ion channel FluC (129 aa).

A run of 4 helical transmembrane segments spans residues 4 to 24 (LFVA…SGLI), 32 to 52 (FPWG…AFAT), 69 to 89 (FFMV…LQTL), and 105 to 125 (VLSV…AVLI). The Na(+) site is built by Gly-76 and Thr-79.

The protein belongs to the fluoride channel Fluc/FEX (TC 1.A.43) family.

The protein resides in the cell inner membrane. The catalysed reaction is fluoride(in) = fluoride(out). With respect to regulation, na(+) is not transported, but it plays an essential structural role and its presence is essential for fluoride channel function. Its function is as follows. Fluoride-specific ion channel. Important for reducing fluoride concentration in the cell, thus reducing its toxicity. The polypeptide is Fluoride-specific ion channel FluC (Rhodospirillum rubrum (strain ATCC 11170 / ATH 1.1.1 / DSM 467 / LMG 4362 / NCIMB 8255 / S1)).